We begin with the raw amino-acid sequence, 457 residues long: Bifunctional protein GlmU (457 aa).

Residues 1–230 (MPLSLPLHIV…PREVEGVNDL (230 aa)) form a pyrophosphorylase region. UDP-N-acetyl-alpha-D-glucosamine-binding positions include 12–15 (LAAG), Lys-26, Gln-78, 83–84 (GT), 105–107 (YGD), Gly-140, Glu-155, Asn-170, and Asn-228. Position 107 (Asp-107) interacts with Mg(2+). Asn-228 serves as a coordination point for Mg(2+). A linker region spans residues 231–251 (WQLTQLERTWQIRAARALCLQ). Residues 252 to 457 (GARVADPARL…DGWQRPKKKT (206 aa)) are N-acetyltransferase. UDP-N-acetyl-alpha-D-glucosamine-binding residues include Arg-334 and Lys-352. His-364 (proton acceptor) is an active-site residue. The UDP-N-acetyl-alpha-D-glucosamine site is built by Tyr-367 and Asn-378. Residues Ala-381, 387-388 (NY), Ser-406, Ala-424, and Arg-441 contribute to the acetyl-CoA site.

This sequence in the N-terminal section; belongs to the N-acetylglucosamine-1-phosphate uridyltransferase family. It in the C-terminal section; belongs to the transferase hexapeptide repeat family. In terms of assembly, homotrimer. Requires Mg(2+) as cofactor.

It localises to the cytoplasm. The enzyme catalyses alpha-D-glucosamine 1-phosphate + acetyl-CoA = N-acetyl-alpha-D-glucosamine 1-phosphate + CoA + H(+). It carries out the reaction N-acetyl-alpha-D-glucosamine 1-phosphate + UTP + H(+) = UDP-N-acetyl-alpha-D-glucosamine + diphosphate. It functions in the pathway nucleotide-sugar biosynthesis; UDP-N-acetyl-alpha-D-glucosamine biosynthesis; N-acetyl-alpha-D-glucosamine 1-phosphate from alpha-D-glucosamine 6-phosphate (route II): step 2/2. Its pathway is nucleotide-sugar biosynthesis; UDP-N-acetyl-alpha-D-glucosamine biosynthesis; UDP-N-acetyl-alpha-D-glucosamine from N-acetyl-alpha-D-glucosamine 1-phosphate: step 1/1. The protein operates within bacterial outer membrane biogenesis; LPS lipid A biosynthesis. Its function is as follows. Catalyzes the last two sequential reactions in the de novo biosynthetic pathway for UDP-N-acetylglucosamine (UDP-GlcNAc). The C-terminal domain catalyzes the transfer of acetyl group from acetyl coenzyme A to glucosamine-1-phosphate (GlcN-1-P) to produce N-acetylglucosamine-1-phosphate (GlcNAc-1-P), which is converted into UDP-GlcNAc by the transfer of uridine 5-monophosphate (from uridine 5-triphosphate), a reaction catalyzed by the N-terminal domain. The protein is Bifunctional protein GlmU of Xylella fastidiosa (strain M12).